Reading from the N-terminus, the 329-residue chain is 4-hydroxythreonine-4-phosphate dehydrogenase (329 aa).

Positions 136 and 137 each coordinate substrate. Residues His-166, His-211, and His-266 each contribute to the a divalent metal cation site. The substrate site is built by Lys-274, Asn-283, and Arg-292.

This sequence belongs to the PdxA family. In terms of assembly, homodimer. Zn(2+) serves as cofactor. Requires Mg(2+) as cofactor. Co(2+) is required as a cofactor.

It is found in the cytoplasm. The enzyme catalyses 4-(phosphooxy)-L-threonine + NAD(+) = 3-amino-2-oxopropyl phosphate + CO2 + NADH. It functions in the pathway cofactor biosynthesis; pyridoxine 5'-phosphate biosynthesis; pyridoxine 5'-phosphate from D-erythrose 4-phosphate: step 4/5. Its function is as follows. Catalyzes the NAD(P)-dependent oxidation of 4-(phosphooxy)-L-threonine (HTP) into 2-amino-3-oxo-4-(phosphooxy)butyric acid which spontaneously decarboxylates to form 3-amino-2-oxopropyl phosphate (AHAP). In Salmonella typhi, this protein is 4-hydroxythreonine-4-phosphate dehydrogenase.